The following is a 374-amino-acid chain: uncharacterized protein (374 aa).

The segment at proline 182–valine 201 is disordered. A compositionally biased stretch (polar residues) spans proline 188–serine 197.

This is an uncharacterized protein from Rattus norvegicus (Rat).